Here is a 256-residue protein sequence, read N- to C-terminus: tRNA (guanine-N(1)-)-methyltransferase (256 aa).

Residues G119 and I139–V144 each bind S-adenosyl-L-methionine.

Belongs to the RNA methyltransferase TrmD family. As to quaternary structure, homodimer.

The protein localises to the cytoplasm. It carries out the reaction guanosine(37) in tRNA + S-adenosyl-L-methionine = N(1)-methylguanosine(37) in tRNA + S-adenosyl-L-homocysteine + H(+). Specifically methylates guanosine-37 in various tRNAs. In Nitrosospira multiformis (strain ATCC 25196 / NCIMB 11849 / C 71), this protein is tRNA (guanine-N(1)-)-methyltransferase.